The chain runs to 335 residues: L-carnitine dehydrogenase (335 aa).

29-34 (GTGVIG) serves as a coordination point for NAD(+).

Belongs to the 3-hydroxyacyl-CoA dehydrogenase family. L-carnitine dehydrogenase subfamily. As to quaternary structure, homodimer.

The protein resides in the cytoplasm. It catalyses the reaction carnitine + NAD(+) = 3-dehydrocarnitine + NADH + H(+). Its pathway is amine and polyamine metabolism; carnitine metabolism. Functionally, catalyzes the NAD(+)-dependent oxidation of L-carnitine to 3-dehydrocarnitine. This Streptomyces griseus subsp. griseus (strain JCM 4626 / CBS 651.72 / NBRC 13350 / KCC S-0626 / ISP 5235) protein is L-carnitine dehydrogenase.